The primary structure comprises 815 residues: Chromatin assembly factor 1 subunit FAS1 (815 aa).

5 disordered regions span residues 1 to 39 (MDEV…TSEE), 292 to 330 (NNKE…KKQL), 434 to 477 (KLST…KKSR), 502 to 577 (QVVK…EGVQ), and 791 to 815 (RCLP…NENA). 2 stretches are compositionally biased toward basic and acidic residues: residues 10 to 21 (NENRKTMIEPKK) and 292 to 328 (NNKE…ELKK). Positions 244-336 (EEKLLLKQLE…KKQLQVQKQA (93 aa)) form a coiled coil. Acidic residues-rich tracts occupy residues 516–532 (LDYE…EEAG) and 554–576 (DDED…DEGV). A compositionally biased stretch (basic and acidic residues) spans 806-815 (AAERLENENA).

It belongs to the CHAF1A family. As to quaternary structure, component of the chromatin assembly factor 1 (CAF-1) complex, composed of FAS1, FAS2 and MSI1. Interacts with CYP71. Expressed in the shoot apical meristem, young leaf primordia, root tip and first lateral root primordium at the hypocotyl/root junction.

It is found in the nucleus. Its function is as follows. Component of the chromatin assembly factor complex (CAF-1) involved in chromatin assembly following DNA replication and DNA repair. Assembles histone octamers onto replicating DNA in vitro. Required for several aspects of development, including seedling growth and leaf hair differentiation. Plays a critical role in the organization of shoot apical meristem (SAM) and root apical meristem (RAM) during postembryonic development by facilitating stable maintenance of gene expression states. Seems not required to maintain transcriptional repression of heterochromatic genes. Involved in heterologous recombination. May repress endocycle. This is Chromatin assembly factor 1 subunit FAS1 (FAS1) from Arabidopsis thaliana (Mouse-ear cress).